A 1239-amino-acid polypeptide reads, in one-letter code: Erythroid differentiation-related factor 1 (1239 aa).

Disordered regions lie at residues 1 to 39 (MGDP…QGSA), 219 to 269 (AQPV…REPL), 517 to 559 (PKKE…DPAD), and 620 to 646 (KKES…TRGG). 2 stretches are compositionally biased toward low complexity: residues 9–28 (AEAS…LSQA) and 253–263 (SSVSEDPSASS). Residues 530 to 547 (NSDESYSEEEEEMADSDE) show a composition bias toward acidic residues. 2 TPR repeats span residues 693 to 726 (SKAY…HDTY) and 914 to 953 (AQAH…LGTR).

It is found in the nucleus. Its function is as follows. Transcription factor involved in erythroid differentiation. Involved in transcriptional activation of the globin gene. The chain is Erythroid differentiation-related factor 1 (Edrf1) from Mus musculus (Mouse).